The sequence spans 90 residues: uncharacterized protein (90 aa).

This is an uncharacterized protein from Clostridium acetobutylicum (strain ATCC 824 / DSM 792 / JCM 1419 / IAM 19013 / LMG 5710 / NBRC 13948 / NRRL B-527 / VKM B-1787 / 2291 / W).